We begin with the raw amino-acid sequence, 504 residues long: Hydroxyisobutyraldehyde dehydrogenase (504 aa).

The Proton acceptor role is filled by E260. The active-site Nucleophile is the C294.

This sequence belongs to the aldehyde dehydrogenase family.

It is found in the cytoplasm. The catalysed reaction is 2-hydroxy-2-methylpropanal + NAD(+) + H2O = 2-hydroxy-2-methylpropanoate + NADH + 2 H(+). Involved in the degradation of methyl tert-butyl ether (MTBE). Catalyzes the conversion of hydroxyisobutyraldehyde to hydroxyisobutyric acid (HIBA). The polypeptide is Hydroxyisobutyraldehyde dehydrogenase (Mycolicibacterium austroafricanum (Mycobacterium austroafricanum)).